Consider the following 89-residue polypeptide: MSVADIKKQDIVKDNGRSANDTGSPEVQVALLTARINELQPHFKAHMKDHHSRRGLLRMVSRRRRLLDYLKSKDADRYTALVAKLGLRK.

A compositionally biased stretch (basic and acidic residues) spans 1 to 16 (MSVADIKKQDIVKDNG). Residues 1 to 24 (MSVADIKKQDIVKDNGRSANDTGS) form a disordered region.

Belongs to the universal ribosomal protein uS15 family. In terms of assembly, part of the 30S ribosomal subunit. Forms a bridge to the 50S subunit in the 70S ribosome, contacting the 23S rRNA.

Its function is as follows. One of the primary rRNA binding proteins, it binds directly to 16S rRNA where it helps nucleate assembly of the platform of the 30S subunit by binding and bridging several RNA helices of the 16S rRNA. Functionally, forms an intersubunit bridge (bridge B4) with the 23S rRNA of the 50S subunit in the ribosome. The polypeptide is Small ribosomal subunit protein uS15 (Ralstonia pickettii (strain 12J)).